Consider the following 252-residue polypeptide: Thiazole synthase (252 aa).

The active-site Schiff-base intermediate with DXP is the Lys-91. Residues Gly-152, 179–180, and 201–202 each bind 1-deoxy-D-xylulose 5-phosphate; these read AG and NT.

It belongs to the ThiG family. In terms of assembly, homotetramer. Forms heterodimers with either ThiH or ThiS.

The protein resides in the cytoplasm. It carries out the reaction [ThiS sulfur-carrier protein]-C-terminal-Gly-aminoethanethioate + 2-iminoacetate + 1-deoxy-D-xylulose 5-phosphate = [ThiS sulfur-carrier protein]-C-terminal Gly-Gly + 2-[(2R,5Z)-2-carboxy-4-methylthiazol-5(2H)-ylidene]ethyl phosphate + 2 H2O + H(+). Its pathway is cofactor biosynthesis; thiamine diphosphate biosynthesis. Catalyzes the rearrangement of 1-deoxy-D-xylulose 5-phosphate (DXP) to produce the thiazole phosphate moiety of thiamine. Sulfur is provided by the thiocarboxylate moiety of the carrier protein ThiS. In vitro, sulfur can be provided by H(2)S. This Gluconobacter oxydans (strain 621H) (Gluconobacter suboxydans) protein is Thiazole synthase.